Here is a 491-residue protein sequence, read N- to C-terminus: MEEIPAQEAAGSPRVQFQSLETQSECLSPEPQFVQDTDMEQGLTGDGETREENKLLIPKQKISEEVHSYKVRVGRLKHDITQVPETREVYKSEDRLERLQEILRKFLYLEREFRQITISKETFTSEKNNECHEPEKSFSLDSTIDADQRVLRIQNTDDNDKYDMSFNQNSASGKHEHLNLTEDFQSSECKESLMDLSHLNKWESIPNTEKSYKCDVCGKIFHQSSALTRHQRIHTREKPYKCKECEKSFSQSSSLSRHKRIHTREKPYKCEASDKSCEASDKSCSPSSGIIQHKKIHTRAKSYKCSSCERVFSRSVHLTQHQKIHKEMPCKCTVCGSDFCHTSYLLEHQRVHHEEKAYEYDEYGLAYIKQQGIHFREKPYTCSECGKDFRLNSHLIQHQRIHTGEKAHECNECGKAFSQTSCLIQHHKMHRKEKSYECNEYEGSFSHSSDLILQQEVLTRQKAFDCDVWEKNSSQRAHLVQHQSIHTKENS.

The tract at residues 1–52 (MEEIPAQEAAGSPRVQFQSLETQSECLSPEPQFVQDTDMEQGLTGDGETREE) is disordered. Residues 15–26 (VQFQSLETQSEC) are compositionally biased toward polar residues. Residue Q60 is modified to Phosphoserine. Residues K77, K190, and K201 each participate in a glycyl lysine isopeptide (Lys-Gly) (interchain with G-Cter in SUMO2) cross-link. 6 C2H2-type zinc fingers span residues 212–234 (YKCD…QRIH), 240–262 (YKCK…KRIH), 303–325 (YKCS…QKIH), 330–353 (CKCT…RVHH), 380–402 (YTCS…QRIH), and 408–430 (HECN…HKMH).

This sequence belongs to the krueppel C2H2-type zinc-finger protein family. As to quaternary structure, interacts with VAV1 and CDK4. Interacts with INTS13; promoting association with the integrator complex.

Its subcellular location is the nucleus. In terms of biological role, probable transcription factor. The chain is Zinc finger protein 655 from Homo sapiens (Human).